The chain runs to 345 residues: High mobility group protein 20A (345 aa).

Disordered stretches follow at residues 1-124 (MENT…TERP) and 167-198 (QYQNTDAYQTYSRKAQSRQKGRQQRQEGVRGV). Composition is skewed to polar residues over residues 32–48 (LSGSSQAPFHPQSPTLQ) and 57–67 (LQQSGEQQLGN). Basic residues predominate over residues 80–94 (TRRGGWTKGRKRKRS). The segment at residues 101-169 (PKAPLTGYVR…RYTKELQQYQ (69 aa)) is a DNA-binding region (HMG box). The segment covering 112 to 124 (MNERREQLRTERP) has biased composition (basic and acidic residues). Residues 167–180 (QYQNTDAYQTYSRK) show a composition bias toward polar residues. A coiled-coil region spans residues 227-290 (SKAREAELRQ…QHLQSVRQAL (64 aa)).

The protein resides in the nucleus. In terms of biological role, plays a role in neuronal differentiation. The chain is High mobility group protein 20A (hmg20a) from Xenopus tropicalis (Western clawed frog).